The primary structure comprises 429 residues: Transcriptional coactivator AacuS (429 aa).

In terms of domain architecture, HTH iclR-type spans 80–144; the sequence is MASQTQLLAC…GFLQEPELGH (65 aa). The H-T-H motif DNA-binding region spans 110–129; that stretch reads IKDVAELIGVPENHICRIVR.

Its subcellular location is the nucleus. Functionally, transcriptional coactivator; part of the gene cluster that mediates the biosynthesis of the tetrahydroxanthone dimer secalonic acid D. The polypeptide is Transcriptional coactivator AacuS (Aspergillus aculeatus (strain ATCC 16872 / CBS 172.66 / WB 5094)).